Here is a 340-residue protein sequence, read N- to C-terminus: Uroporphyrinogen decarboxylase (340 aa).

Residues 21–25 (RQAGR), aspartate 71, tyrosine 148, serine 203, and histidine 316 each bind substrate.

It belongs to the uroporphyrinogen decarboxylase family. Homodimer.

Its subcellular location is the cytoplasm. It catalyses the reaction uroporphyrinogen III + 4 H(+) = coproporphyrinogen III + 4 CO2. The protein operates within porphyrin-containing compound metabolism; protoporphyrin-IX biosynthesis; coproporphyrinogen-III from 5-aminolevulinate: step 4/4. Its function is as follows. Catalyzes the decarboxylation of four acetate groups of uroporphyrinogen-III to yield coproporphyrinogen-III. The polypeptide is Uroporphyrinogen decarboxylase (Campylobacter jejuni subsp. jejuni serotype O:23/36 (strain 81-176)).